Here is a 92-residue protein sequence, read N- to C-terminus: Conotoxin Mr15.2 (92 aa).

An N-terminal signal peptide occupies residues 1–20; sequence MSTLKMMLLILLLLLPMATF. The propeptide occupies 21-53; it reads DSDGQAIPGGGIPSAVNSRVGGDEKSGRSLEKR. A disordered region spans residues 30–49; that stretch reads GGIPSAVNSRVGGDEKSGRS.

Belongs to the conotoxin N superfamily. Contains 4 disulfide bonds. In terms of tissue distribution, expressed by the venom duct.

The protein localises to the secreted. This Conus marmoreus (Marble cone) protein is Conotoxin Mr15.2.